We begin with the raw amino-acid sequence, 275 residues long: Voltage-dependent calcium channel gamma-5 subunit (275 aa).

4 consecutive transmembrane segments (helical) span residues 8-28 (ALTL…GIAV), 103-123 (FPLV…IGHI), 129-149 (ILAF…VVGL), and 176-196 (GWSF…GVMS).

The protein belongs to the PMP-22/EMP/MP20 family. CACNG subfamily. The L-type calcium channel is composed of five subunits: alpha-1, alpha-2/delta, beta and gamma. Acts as an auxiliary subunit for AMPA-selective glutamate receptors (AMPARs). Found in a complex with GRIA1, GRIA2, GRIA3, GRIA4, CNIH2, CNIH3, CACNG2, CACNG3, CACNG4, CACNG7 and CACNG8. Interacts with GRIA1, GRIA2, GRIA3 and GRIA4.

It is found in the membrane. Its subcellular location is the postsynaptic density membrane. Its function is as follows. Regulates the gating properties of AMPA-selective glutamate receptors (AMPARs). Modulates their gating properties by accelerating their rates of activation, deactivation and desensitization. Displays subunit-specific AMPA receptor regulation. Shows specificity for GRIA1, GRIA4 and the long isoform of GRIA2. Thought to stabilize the calcium channel in an inactivated (closed) state. The protein is Voltage-dependent calcium channel gamma-5 subunit (CACNG5) of Homo sapiens (Human).